The sequence spans 103 residues: Large ribosomal subunit protein bL21 (103 aa).

The protein belongs to the bacterial ribosomal protein bL21 family. As to quaternary structure, part of the 50S ribosomal subunit. Contacts protein L20.

Its function is as follows. This protein binds to 23S rRNA in the presence of protein L20. This is Large ribosomal subunit protein bL21 from Acinetobacter baylyi (strain ATCC 33305 / BD413 / ADP1).